Consider the following 361-residue polypeptide: Chorismate synthase (361 aa).

An NADP(+)-binding site is contributed by Arg48. Residues 125 to 127 (RSS), 238 to 239 (NA), Gly278, 293 to 297 (KPTSS), and Arg319 each bind FMN.

This sequence belongs to the chorismate synthase family. In terms of assembly, homotetramer. FMNH2 serves as cofactor.

The catalysed reaction is 5-O-(1-carboxyvinyl)-3-phosphoshikimate = chorismate + phosphate. The protein operates within metabolic intermediate biosynthesis; chorismate biosynthesis; chorismate from D-erythrose 4-phosphate and phosphoenolpyruvate: step 7/7. Functionally, catalyzes the anti-1,4-elimination of the C-3 phosphate and the C-6 proR hydrogen from 5-enolpyruvylshikimate-3-phosphate (EPSP) to yield chorismate, which is the branch point compound that serves as the starting substrate for the three terminal pathways of aromatic amino acid biosynthesis. This reaction introduces a second double bond into the aromatic ring system. This chain is Chorismate synthase, found in Aliivibrio fischeri (strain ATCC 700601 / ES114) (Vibrio fischeri).